Reading from the N-terminus, the 153-residue chain is MAL-like protein (153 aa).

Transmembrane regions (helical) follow at residues 22 to 42 (LFLT…FLVW), 59 to 79 (VMYV…SYLF), 97 to 117 (GTTG…TIVS), and 131 to 151 (AASF…FSIY). In terms of domain architecture, MARVEL spans 22–153 (LFLTIPFAFF…ILHAFSIYYH (132 aa)).

Belongs to the MAL family.

The protein resides in the membrane. This chain is MAL-like protein (MALL), found in Homo sapiens (Human).